A 445-amino-acid polypeptide reads, in one-letter code: N-succinylarginine dihydrolase (445 aa).

Substrate contacts are provided by residues 19 to 28 (AGLSYGNVAS), N110, and 137 to 138 (HR). E174 is an active-site residue. R214 is a substrate binding site. H250 is a catalytic residue. 2 residues coordinate substrate: D252 and N363. Catalysis depends on C369, which acts as the Nucleophile.

The protein belongs to the succinylarginine dihydrolase family. Homodimer.

It catalyses the reaction N(2)-succinyl-L-arginine + 2 H2O + 2 H(+) = N(2)-succinyl-L-ornithine + 2 NH4(+) + CO2. The protein operates within amino-acid degradation; L-arginine degradation via AST pathway; L-glutamate and succinate from L-arginine: step 2/5. Functionally, catalyzes the hydrolysis of N(2)-succinylarginine into N(2)-succinylornithine, ammonia and CO(2). This is N-succinylarginine dihydrolase from Shewanella loihica (strain ATCC BAA-1088 / PV-4).